A 469-amino-acid chain; its full sequence is Regulator of G-protein signaling 7 (469 aa).

Residues 37–112 (EKNGIPIRTV…DDGTFYRFQT (76 aa)) form the DEP domain. Phosphoserine occurs at positions 229 and 241. Residues 235-256 (NDIRSHSPTHTPTPETKPPTED) form a disordered region. T243 bears the Phosphothreonine mark. In terms of domain architecture, G protein gamma spans 255 to 316 (EDELQQQIKY…LSDDTTFWEL (62 aa)). One can recognise an RGS domain in the interval 333–448 (GMDEALKDPV…IRSSAYQELL (116 aa)). S434 bears the Phosphoserine mark.

In terms of assembly, interacts with GNB5, forming the RGS7-GNB5 complex. Interacts with GPR158; promotes the GTPase activator activity of the RGS7-GNB5 complex in absence of glycine, in contrast GTPase activator activity of the RGS7-GNB5 complex is inhibited in presence of glycine. Interacts with GPR179. Interacts with PKD1; this prevents rapid proteasomal degradation. Interacts with RGS7BP, leading to regulate the subcellular location of the heterodimer formed with GNB5. Interacts (phosphorylated form) with 14-3-3 protein YWHAQ. Interacts with SNAPIN. Interacts with GNAI1. Interacts with GNAO1, GNAI3 and GNAZ. Palmitoylated. In terms of processing, ubiquitinated, leading to rapid proteasomal degradation. Post-translationally, phosphorylation and subsequent interaction with 14-3-3 proteins inhibits GAP activity. In terms of tissue distribution, detected in retina (at protein level).

The protein resides in the cytoplasm. The protein localises to the cytosol. It localises to the cell membrane. Its subcellular location is the membrane. Functionally, GTPase activator component of the RGS7-GNB5 complex that regulates G protein-coupled receptor signaling cascades. The RGS7-GNB5 complex acts as an inhibitor signal transduction by promoting the GTPase activity of G protein alpha subunits, such as GNAO1, thereby driving them into their inactive GDP-bound form. May play a role in synaptic vesicle exocytosis. Glycine-dependent regulation of the RGS7-GNB5 complex by GPR158 affects mood and cognition via its ability to regulate neuronal excitability in L2/L3 pyramidal neurons of the prefrontal cortex. Modulates the activity of potassium channels that are activated by GNAO1 in response to muscarinic acetylcholine receptor M2/CHRM2 signaling. The chain is Regulator of G-protein signaling 7 (RGS7) from Bos taurus (Bovine).